We begin with the raw amino-acid sequence, 1370 residues long: DNA polymerase II large subunit (1370 aa).

2 disordered regions span residues 279 to 317 (IGAD…PRAA) and 1041 to 1081 (AGDA…DGGS).

It belongs to the archaeal DNA polymerase II family. As to quaternary structure, heterodimer of a large subunit and a small subunit. This protein undergoes a protein self splicing that involves a post-translational excision of the intervening region (intein) followed by peptide ligation.

The catalysed reaction is DNA(n) + a 2'-deoxyribonucleoside 5'-triphosphate = DNA(n+1) + diphosphate. It carries out the reaction Exonucleolytic cleavage in the 3'- to 5'-direction to yield nucleoside 5'-phosphates.. Possesses two activities: a DNA synthesis (polymerase) and an exonucleolytic activity that degrades single-stranded DNA in the 3'- to 5'-direction. Has a template-primer preference which is characteristic of a replicative DNA polymerase. The protein is DNA polymerase II large subunit (polC) of Halobacterium salinarum (strain ATCC 700922 / JCM 11081 / NRC-1) (Halobacterium halobium).